A 479-amino-acid polypeptide reads, in one-letter code: ATP-dependent protease ATPase subunit HslU (479 aa).

Residues isoleucine 32, glycine 74–glutamate 79, aspartate 290, glutamate 355, and arginine 427 each bind ATP.

This sequence belongs to the ClpX chaperone family. HslU subfamily. A double ring-shaped homohexamer of HslV is capped on each side by a ring-shaped HslU homohexamer. The assembly of the HslU/HslV complex is dependent on binding of ATP.

The protein localises to the cytoplasm. ATPase subunit of a proteasome-like degradation complex; this subunit has chaperone activity. The binding of ATP and its subsequent hydrolysis by HslU are essential for unfolding of protein substrates subsequently hydrolyzed by HslV. HslU recognizes the N-terminal part of its protein substrates and unfolds these before they are guided to HslV for hydrolysis. In Leptospira interrogans serogroup Icterohaemorrhagiae serovar Lai (strain 56601), this protein is ATP-dependent protease ATPase subunit HslU.